A 383-amino-acid chain; its full sequence is Chaperone protein DnaJ (383 aa).

One can recognise a J domain in the interval 5-70 (DYYDVLGVSK…DKKAAYDRYG (66 aa)). The segment at 142 to 220 (GMQKTISVPG…CRGAGREEKT (79 aa)) adopts a CR-type zinc-finger fold. Residues Cys-155, Cys-158, Cys-172, Cys-175, Cys-194, Cys-197, Cys-208, and Cys-211 each contribute to the Zn(2+) site. CXXCXGXG motif repeat units lie at residues 155–162 (CSACEGTG), 172–179 (CPTCSGMG), 194–201 (CPTCSGMG), and 208–215 (CQACRGAG).

It belongs to the DnaJ family. In terms of assembly, homodimer. It depends on Zn(2+) as a cofactor.

It localises to the cytoplasm. Functionally, participates actively in the response to hyperosmotic and heat shock by preventing the aggregation of stress-denatured proteins and by disaggregating proteins, also in an autonomous, DnaK-independent fashion. Unfolded proteins bind initially to DnaJ; upon interaction with the DnaJ-bound protein, DnaK hydrolyzes its bound ATP, resulting in the formation of a stable complex. GrpE releases ADP from DnaK; ATP binding to DnaK triggers the release of the substrate protein, thus completing the reaction cycle. Several rounds of ATP-dependent interactions between DnaJ, DnaK and GrpE are required for fully efficient folding. Also involved, together with DnaK and GrpE, in the DNA replication of plasmids through activation of initiation proteins. This chain is Chaperone protein DnaJ, found in Dinoroseobacter shibae (strain DSM 16493 / NCIMB 14021 / DFL 12).